Here is a 360-residue protein sequence, read N- to C-terminus: Phosphoserine aminotransferase (360 aa).

Residue Arg-42 participates in L-glutamate binding. The pyridoxal 5'-phosphate site is built by Trp-102, Thr-152, Asp-171, and Gln-194. Lys-195 is subject to N6-(pyridoxal phosphate)lysine. 237–238 contacts pyridoxal 5'-phosphate; the sequence is NT.

Belongs to the class-V pyridoxal-phosphate-dependent aminotransferase family. SerC subfamily. In terms of assembly, homodimer. Pyridoxal 5'-phosphate serves as cofactor.

Its subcellular location is the cytoplasm. The enzyme catalyses O-phospho-L-serine + 2-oxoglutarate = 3-phosphooxypyruvate + L-glutamate. It carries out the reaction 4-(phosphooxy)-L-threonine + 2-oxoglutarate = (R)-3-hydroxy-2-oxo-4-phosphooxybutanoate + L-glutamate. It participates in amino-acid biosynthesis; L-serine biosynthesis; L-serine from 3-phospho-D-glycerate: step 2/3. The protein operates within cofactor biosynthesis; pyridoxine 5'-phosphate biosynthesis; pyridoxine 5'-phosphate from D-erythrose 4-phosphate: step 3/5. Functionally, catalyzes the reversible conversion of 3-phosphohydroxypyruvate to phosphoserine and of 3-hydroxy-2-oxo-4-phosphonooxybutanoate to phosphohydroxythreonine. The chain is Phosphoserine aminotransferase from Coxiella burnetii (strain Dugway 5J108-111).